The following is a 108-amino-acid chain: Small ribosomal subunit protein uS10 (108 aa).

Belongs to the universal ribosomal protein uS10 family. Part of the 30S ribosomal subunit.

Functionally, involved in the binding of tRNA to the ribosomes. The sequence is that of Small ribosomal subunit protein uS10 from Ehrlichia chaffeensis (strain ATCC CRL-10679 / Arkansas).